The following is an 858-amino-acid chain: M-phase phosphoprotein 8 (858 aa).

The interval 18 to 55 (VPDSIGRSPESEGVGAGDEEKDAATKGTVAVGDSEEDG) is disordered. Phosphoserine occurs at positions 51, 85, 136, and 138. One can recognise a Chromo domain in the interval 59–118 (FEVERILDMKCEGGKNLYKVRWKGYTSEDDTWEPEVHLEDCKEVLLEFRKKLAENKAKAV). Positions 80–87 (WKGYTSED) are histone H3K9me3 binding. The interval 129 to 175 (NDIFEADSDSDQQSDTKEDISPRKKKKKIKCKEETSPEDLRKKRTKM) is disordered. T144 carries the post-translational modification Phosphothreonine. S149 and S164 each carry phosphoserine; by CDK1. The span at 159–169 (CKEETSPEDLR) shows a compositional bias: basic and acidic residues. S188 carries the phosphoserine modification. Disordered regions lie at residues 209 to 234 (ELKDSKKPKKDEIKETKELKKANKRA) and 250 to 300 (NRKT…DKTA). 3 positions are modified to phosphoserine: S267, S271, and S278. The span at 273-282 (ILEDDSEDFI) shows a compositional bias: acidic residues. Over residues 283–300 (SDNREENQNVRSVRDKTA) the composition is skewed to basic and acidic residues. S318 bears the Phosphoserine mark. The disordered stretch occupies residues 321-431 (EDAGTRVRRK…YDLDKEEKAR (111 aa)). Over residues 335 to 357 (RKFEEPKEIKKLESTNAFLERRA) the composition is skewed to basic and acidic residues. The residue at position 385 (T385) is a Phosphothreonine; by CDK1. 2 positions are modified to phosphoserine: S392 and S400. Basic and acidic residues predominate over residues 407 to 431 (EKEKKNEPKGKYQKRYDLDKEEKAR). T453 is subject to Phosphothreonine. 4 ANK repeats span residues 598–627 (TGMTLVMLAAAGGQDDLLRLLITKGAKVNG), 631–660 (NGTTALIHAAEKNFLTTVAILLEAGAFVNV), 664–693 (NGETALMKACKRGNSDIVRLVIECGADCNI), and 697–726 (HQNSALYFAKQCNNVLVYELLKSHLETLSR).

Homodimer. Interacts (via chromo domain) with histone H3K9me3. Has the highest affinity for H3K9me3, and lesser affinity for H3K9me2 and H3K9me1. Component of the HUSH complex; at least composed of TASOR, PPHLN1 and MPHOSPH8. Interacts with DNMT3, EHMT1 and SETDB1. Interacts with MORC2; the interaction associateS MORC2 with the HUSH complex which recruits MORC2 to heterochromatic loci. Interacts with ZNF638; leading to recruitment of the HUSH complex to unintegrated retroviral DNA. Interacts with TASOR. Post-translationally, phosphorylated in M (mitotic) phase. Phosphorylation by CDK1 promotes dissociation from chromatin. In terms of tissue distribution, expressed in the spermatogonia, spermatocytes and granular cells within the cerebellum.

The protein localises to the nucleus. It localises to the chromosome. In terms of biological role, heterochromatin component that specifically recognizes and binds methylated 'Lys-9' of histone H3 (H3K9me) and promotes recruitment of proteins that mediate epigenetic repression. Mediates recruitment of the HUSH complex to H3K9me3 sites: the HUSH complex is recruited to genomic loci rich in H3K9me3 and is required to maintain transcriptional silencing by promoting recruitment of SETDB1, a histone methyltransferase that mediates further deposition of H3K9me3, as well as MORC2. Binds H3K9me and promotes DNA methylation by recruiting DNMT3A to target CpG sites; these can be situated within the coding region of the gene. Mediates down-regulation of CDH1 expression. Also represses L1 retrotransposons in collaboration with MORC2 and, probably, SETDB1, the silencing is dependent of repressive epigenetic modifications, such as H3K9me3 mark. Silencing events often occur within introns of transcriptionally active genes, and lead to the down-regulation of host gene expression. The HUSH complex is also involved in the silencing of unintegrated retroviral DNA by being recruited by ZNF638: some part of the retroviral DNA formed immediately after infection remains unintegrated in the host genome and is transcriptionally repressed. In Mus musculus (Mouse), this protein is M-phase phosphoprotein 8.